A 77-amino-acid chain; its full sequence is P fimbrial regulatory protein KS71A (77 aa).

The protein is P fimbrial regulatory protein KS71A (KS71A) of Escherichia coli.